The chain runs to 216 residues: Cyclic AMP receptor protein (216 aa).

6–126 (LFHGLAPEEV…HNLAALLARR (121 aa)) contacts a nucleoside 3',5'-cyclic phosphate. 3',5'-cyclic AMP contacts are provided by residues 75–78 (GEMS) and 85–86 (RS). Positions 140-206 (EEARNRVAYA…PGTVEVREAA (67 aa)) constitute an HTH crp-type domain. Positions 166–185 (HHELAALAGTSRETVSRVLH) form a DNA-binding region, H-T-H motif.

In terms of assembly, homodimer.

Activates transcription. Positively regulates six promoters upstream of the TTHB186, TTHB147, TTHB178, TTHB159, TTHA0771 and TTHA0176 genes in a cAMP-dependent manner. Regulated genes include clustered regularly interspaced short palindromic repeat (CRISPR) associated (Cas) genes, and the genes encoding a putative transcriptional regulator, a protein containing the exonuclease III-like domain of DNA polymerase, a GCN5-related acetyltransferase homolog, and some T.thermophilus-specific proteins of unknown function. The consensus DNA-binding site of this transcriptional regulator is 5'-(CT)NNG(G/T)(G/T)C(A/C)N(A/T)NNTCACAN(G/C)(G/C)-3' in which N is G, A, T or C. The protein is Cyclic AMP receptor protein of Thermus thermophilus (strain ATCC 27634 / DSM 579 / HB8).